A 349-amino-acid polypeptide reads, in one-letter code: Ribosomal RNA small subunit methyltransferase H (349 aa).

Residues 34–36 (GGH), D54, F81, D102, and Q109 each bind S-adenosyl-L-methionine.

This sequence belongs to the methyltransferase superfamily. RsmH family.

Its subcellular location is the cytoplasm. The catalysed reaction is cytidine(1402) in 16S rRNA + S-adenosyl-L-methionine = N(4)-methylcytidine(1402) in 16S rRNA + S-adenosyl-L-homocysteine + H(+). Specifically methylates the N4 position of cytidine in position 1402 (C1402) of 16S rRNA. The chain is Ribosomal RNA small subunit methyltransferase H from Dehalococcoides mccartyi (strain ATCC BAA-2266 / KCTC 15142 / 195) (Dehalococcoides ethenogenes (strain 195)).